The primary structure comprises 267 residues: 3-methyl-2-oxobutanoate hydroxymethyltransferase (267 aa).

Residues Asp41 and Asp80 each coordinate Mg(2+). 3-methyl-2-oxobutanoate-binding positions include 41–42 (DS), Asp80, and Lys109. Glu111 lines the Mg(2+) pocket. Catalysis depends on Glu178, which acts as the Proton acceptor.

Belongs to the PanB family. Homodecamer; pentamer of dimers. Requires Mg(2+) as cofactor.

It is found in the cytoplasm. It catalyses the reaction 3-methyl-2-oxobutanoate + (6R)-5,10-methylene-5,6,7,8-tetrahydrofolate + H2O = 2-dehydropantoate + (6S)-5,6,7,8-tetrahydrofolate. It participates in cofactor biosynthesis; (R)-pantothenate biosynthesis; (R)-pantoate from 3-methyl-2-oxobutanoate: step 1/2. Functionally, catalyzes the reversible reaction in which hydroxymethyl group from 5,10-methylenetetrahydrofolate is transferred onto alpha-ketoisovalerate to form ketopantoate. This chain is 3-methyl-2-oxobutanoate hydroxymethyltransferase, found in Kosmotoga olearia (strain ATCC BAA-1733 / DSM 21960 / TBF 19.5.1).